The primary structure comprises 152 residues: Superoxide dismutase [Cu-Zn] (152 aa).

Cu cation-binding residues include histidine 45, histidine 47, and histidine 62. A disulfide bridge connects residues cysteine 56 and cysteine 145. Positions 62, 70, 79, and 82 each coordinate Zn(2+). Histidine 119 contacts Cu cation.

Belongs to the Cu-Zn superoxide dismutase family. In terms of assembly, homodimer. It depends on Cu cation as a cofactor. Zn(2+) is required as a cofactor.

It is found in the cytoplasm. It carries out the reaction 2 superoxide + 2 H(+) = H2O2 + O2. Its function is as follows. Destroys radicals which are normally produced within the cells and which are toxic to biological systems. The polypeptide is Superoxide dismutase [Cu-Zn] (SODCC) (Pisum sativum (Garden pea)).